The primary structure comprises 265 residues: Di-trans,poly-cis-undecaprenyl-diphosphate synthase (265 aa).

Residues 236–238 (RFG) carry the RXG motif; crucial for prenyltransferase activity motif.

It belongs to the UPP synthase family. Mg(2+) serves as cofactor.

The enzyme catalyses 8 isopentenyl diphosphate + (2E,6E)-farnesyl diphosphate = di-trans,octa-cis-undecaprenyl diphosphate + 8 diphosphate. Its pathway is protein modification; protein glycosylation. It functions in the pathway lipid metabolism. In terms of biological role, cis-prenyl transferase involved in the synthesis of dolichol, a long-chain polyprenol that is utilized as a sugar carrier in protein glycosylation in the endoplasmic reticulum (ER). Catalyzes the sequential condensation of isopentenyl pyrophosphate (IPP) with farnesyl pyrophosphate (FPP) to produce a polyprenyl pyrophosphate which contains 11 (major) and 12 (minor) isoprene units. In Giardia intestinalis (strain ATCC 50803 / WB clone C6) (Giardia lamblia), this protein is Di-trans,poly-cis-undecaprenyl-diphosphate synthase.